Reading from the N-terminus, the 527-residue chain is Serine/threonine-protein kinase NLK (527 aa).

Sufficient for interaction with DAPK3 stretches follow at residues 1-125 (MSLC…KAHH) and 124-416 (HHHQ…SKRI). 2 required for interaction with TAB2 regions span residues 1–304 (MSLC…VVTQ) and 434–527 (YHTC…LVWE). Disordered stretches follow at residues 22-72 (AAAA…SSAA) and 90-140 (QQPY…DIEP). The span at 26 to 54 (GHHHHHHHHLPHLPPPHLHHHHHPQHHLH) shows a compositional bias: basic residues. Residues 103-119 (PGPAAAAPAQVQAAAAA) are compositionally biased toward low complexity. Positions 122–131 (KAHHHQHSHH) are enriched in basic residues. The Protein kinase domain maps to 138–427 (IEPDRPIGYG…AKDALAHPYL (290 aa)). ATP is bound by residues 144-152 (IGYGAFGVV) and Lys-167. The Proton acceptor role is filled by Asp-264. The residue at position 298 (Thr-298) is a Phosphothreonine; by autocatalysis. A TQE motif is present at residues 298-300 (TQE). The required for homodimerization and kinase activation and localization to the nucleus stretch occupies residues 428 to 527 (DEGRLRYHTC…EMPPSPLVWE (100 aa)). Ser-522 carries the post-translational modification Phosphoserine.

The protein belongs to the protein kinase superfamily. CMGC Ser/Thr protein kinase family. MAP kinase subfamily. Homodimer. Homodimerization is required for intermolecular autophosphorylation, kinase activation and nuclear localization. May interact with components of cullin-RING-based SCF (SKP1-CUL1-F-box protein) E3 ubiquitin-protein ligase complexes. Interacts with LEF1, MEF2A, MYBL1 and MYBL2. Interacts with the upstream activating kinases HIPK2 and MAP3K7/TAK1. Interaction with MAP3K7/TAK1 seems to be indirect, and may be mediated by other proteins such as STAT3, TAB1 and TAB2. Interacts with and phosphorylates a number of transcription factors including FOXO1, FOXO3, FOXO4, MYB, NOTCH1 and TCF7L2/TCF4. Interacts with DAPK3/ZIPK, and this interaction may disrupt interaction with transcription factors such as TCF7L2/TCF4. Forms a transcriptional repressor complex with CHD7, PPARG and SETDB1. Interacts with RNF138/NARF. Interacts with ATF5; the interaction stabilizes ATF5 at the protein level in a kinase-independent manner. It depends on Mg(2+) as a cofactor. In terms of processing, phosphorylated on Thr-298. Intermolecular autophosphorylation on Thr-298 activates the enzyme.

It localises to the nucleus. Its subcellular location is the cytoplasm. It carries out the reaction L-seryl-[protein] + ATP = O-phospho-L-seryl-[protein] + ADP + H(+). The catalysed reaction is L-threonyl-[protein] + ATP = O-phospho-L-threonyl-[protein] + ADP + H(+). Activated by the non-canonical Wnt signaling pathway, in which WNT5A leads to activation of MAP3K7/TAK1 and HIPK2, which subsequently phosphorylates and activates this protein. Activated by dimerization and subsequent intermolecular autophosphorylation on Thr-298. Other cytokines such as IL6 may also activate this regulatory circuit. Functionally, serine/threonine-protein kinase that regulates a number of transcription factors with key roles in cell fate determination. Positive effector of the non-canonical Wnt signaling pathway, acting downstream of WNT5A, MAP3K7/TAK1 and HIPK2. Negative regulator of the canonical Wnt/beta-catenin signaling pathway. Binds to and phosphorylates TCF7L2/TCF4 and LEF1, promoting the dissociation of the TCF7L2/LEF1/beta-catenin complex from DNA, as well as the ubiquitination and subsequent proteolysis of LEF1. Together these effects inhibit the transcriptional activation of canonical Wnt/beta-catenin target genes. Negative regulator of the Notch signaling pathway. Binds to and phosphorylates NOTCH1, thereby preventing the formation of a transcriptionally active ternary complex of NOTCH1, RBPJ/RBPSUH and MAML1. Negative regulator of the MYB family of transcription factors. Phosphorylation of MYB leads to its subsequent proteolysis while phosphorylation of MYBL1 and MYBL2 inhibits their interaction with the coactivator CREBBP. Other transcription factors may also be inhibited by direct phosphorylation of CREBBP itself. Acts downstream of IL6 and MAP3K7/TAK1 to phosphorylate STAT3, which is in turn required for activation of NLK by MAP3K7/TAK1. Upon IL1B stimulus, cooperates with ATF5 to activate the transactivation activity of C/EBP subfamily members. Phosphorylates ATF5 but also stabilizes ATF5 protein levels in a kinase-independent manner. Acts as an inhibitor of the mTORC1 complex in response to osmotic stress by mediating phosphorylation of RPTOR, thereby preventing recruitment of the mTORC1 complex to lysosomes. The protein is Serine/threonine-protein kinase NLK (NLK) of Canis lupus familiaris (Dog).